Reading from the N-terminus, the 237-residue chain is Speedy protein E4 (237 aa).

Residues 1 to 61 (MASGQARPPF…KRKSEWSDES (61 aa)) are disordered.

It belongs to the Speedy/Ringo family. Predominantly expressed in testis.

The protein is Speedy protein E4 of Homo sapiens (Human).